Reading from the N-terminus, the 708-residue chain is Metal-pseudopaline receptor CntO (708 aa).

Residues 1 to 21 (MRVSVSLVLGVGLGCSSPALW) form the signal peptide. The 107-residue stretch at 63–169 (RIEDIPQAIS…PGGTVNLVTK (107 aa)) folds into the TBDR plug domain. Residues 174–708 (ERFARLHASA…NLTMSLTLNY (535 aa)) enclose the TBDR beta-barrel domain.

This sequence belongs to the TonB-dependent receptor family.

Its subcellular location is the cell outer membrane. Transports the metallophore pseudopaline, which is involved in the acquisition of nickel and zinc, and thus enables bacterial growth inside the host, where metal access is limited. Is probably involved in the import of pseudopaline-metal complexes. The polypeptide is Metal-pseudopaline receptor CntO (Pseudomonas aeruginosa (strain ATCC 15692 / DSM 22644 / CIP 104116 / JCM 14847 / LMG 12228 / 1C / PRS 101 / PAO1)).